The chain runs to 240 residues: 2,3,4,5-tetrahydropyridine-2,6-dicarboxylate N-acetyltransferase (240 aa).

Belongs to the transferase hexapeptide repeat family. DapH subfamily.

The enzyme catalyses (S)-2,3,4,5-tetrahydrodipicolinate + acetyl-CoA + H2O = L-2-acetamido-6-oxoheptanedioate + CoA. Its pathway is amino-acid biosynthesis; L-lysine biosynthesis via DAP pathway; LL-2,6-diaminopimelate from (S)-tetrahydrodipicolinate (acetylase route): step 1/3. In terms of biological role, catalyzes the transfer of an acetyl group from acetyl-CoA to tetrahydrodipicolinate. The protein is 2,3,4,5-tetrahydropyridine-2,6-dicarboxylate N-acetyltransferase of Halalkalibacterium halodurans (strain ATCC BAA-125 / DSM 18197 / FERM 7344 / JCM 9153 / C-125) (Bacillus halodurans).